A 766-amino-acid polypeptide reads, in one-letter code: Leucine-rich repeat and fibronectin type III domain-containing protein 1 (766 aa).

Positions 1-31 (MAPGPFSSGLFSPPPAALPFLLLLWAGASRG) are cleaved as a signal peptide. Positions 32-65 (QPCPGRCICQNVAPTLTMLCAKTGLLFVPPAIDR) constitute an LRRNT domain. Residues 32–536 (QPCPGRCICQ…LRAHFLGGTM (505 aa)) lie on the Extracellular side of the membrane. LRR repeat units lie at residues 66 to 87 (RVVE…DFAN), 90 to 111 (SLVH…AFAD), 114 to 135 (ALRA…QLRG), 138 to 159 (NLRH…AFDA), 163 to 184 (TVED…AVGQ), 187 to 208 (NLNT…TFVQ), and 211 to 232 (KLVR…GLFL). N-linked (GlcNAc...) asparagine glycosylation is present at asparagine 87. In terms of domain architecture, LRRCT spans 252–298 (NPLHCNCELLWLRRLTREDDLETCATPEHLTDRYFWSIPEEEFLCEP). In terms of domain architecture, Ig-like spans 299–386 (PLITRQAGGR…GEATAPVEVC (88 aa)). Residues cysteine 321 and cysteine 370 are joined by a disulfide bond. N-linked (GlcNAc...) asparagine glycosylation occurs at asparagine 343. The tract at residues 397 to 424 (PAAPPPLTEPGSSDIATPGRPGANDSTS) is disordered. The Fibronectin type-III domain maps to 424 to 520 (SERRLVAAEL…GCVQFTTAGD (97 aa)). The chain crosses the membrane as a helical span at residues 537–557 (IIAIGGVIVASVLVFIVLLMI). Topologically, residues 558-766 (RYKVYGDGDS…STEWMLESTV (209 aa)) are cytoplasmic. Disordered stretches follow at residues 568 to 601 (RRIK…PPAP) and 645 to 742 (LCLL…GEDG). A Phosphoserine modification is found at serine 713. A compositionally biased stretch (basic residues) spans 714 to 727 (YPRRARRTKRHRST). Residues 763–766 (ESTV) carry the PDZ-binding motif.

Belongs to the LRFN family. Can form heteromeric complexes with LRFN2, LRFN3, LRFN4 and LRFN5. Forms homomeric complexes, but not across cell junctions. Interacts with DLG4. Also interacts with DLG1, DLG2, and DLG3. Interacts with 2 AMPA receptor subunits GRIA1 and GRIA2 and NMDA receptor subunit GRIN1. Glycosylated. Predominantly expressed in the brain, with a weak, but broad expression in the cerebral cortex and diencephalic nuclei. Also detected in other parts of the central nervous system, including the olfactory bulb, pons, cerebellum, and medulla oblongata, as well as in the peripheral nervous system, such as the ganglia of cranial nerves and the dorsal root ganglion during gestation.

Its subcellular location is the membrane. It localises to the synapse. The protein localises to the postsynaptic density membrane. Promotes neurite outgrowth in hippocampal neurons. Involved in the regulation and maintenance of excitatory synapses. Induces the clustering of excitatory postsynaptic proteins, including DLG4, DLGAP1, GRIA1 and GRIN1. This chain is Leucine-rich repeat and fibronectin type III domain-containing protein 1 (Lrfn1), found in Mus musculus (Mouse).